The chain runs to 260 residues: MKRYTVKDIEALLPKLGADDPRWEMLRQDERKSVQALLARFERQKARRHAIEQRWEELMRYERELYAAGVRRIAGIDEAGRGPLAGPVVAAAVILPKDAYLPGLDDSKRLTPEKREALFAQIEACAVAIGIGIVSAAEIDERNIYEATRQAMAKAVNALSPPPEHLLVDAMAVPCPLPQQRLIKGDANSASIAAASVIAKVTRDRWMKELDRRYPQYGFARHMGYGTPEHFEAIRRYGVTPEHRRSFAPVREVLKASEQL.

One can recognise an RNase H type-2 domain in the interval 71–259 (RRIAGIDEAG…VREVLKASEQ (189 aa)). A divalent metal cation contacts are provided by Asp77, Glu78, and Asp169.

Belongs to the RNase HII family. Mn(2+) serves as cofactor. Mg(2+) is required as a cofactor.

The protein localises to the cytoplasm. The catalysed reaction is Endonucleolytic cleavage to 5'-phosphomonoester.. Its function is as follows. Endonuclease that specifically degrades the RNA of RNA-DNA hybrids. This chain is Ribonuclease HII, found in Geobacillus kaustophilus (strain HTA426).